A 331-amino-acid polypeptide reads, in one-letter code: 3-dehydroquinate synthase homolog (331 aa).

The protein belongs to the archaeal-type DHQ synthase family.

In Persephonella marina (strain DSM 14350 / EX-H1), this protein is 3-dehydroquinate synthase homolog.